The chain runs to 855 residues: E3 ubiquitin-protein ligase TRIM71 (855 aa).

At Ala-2 the chain carries N-acetylalanine. The RING-type zinc-finger motif lies at 12–94 (CLLCKEMCGS…ALKLRCPVCD (83 aa)). Over residues 26 to 42 (SSSSSASSSSSQTSTSS) the composition is skewed to low complexity. Disordered regions lie at residues 26-48 (SSSS…GGGP) and 126-177 (ADEP…SPGS). A compositionally biased stretch (gly residues) spans 135-145 (RAGGGPGGAGG). Positions 147 to 157 (SNHRHHAHHPA) are enriched in basic residues. The B box-type 1; atypical zinc finger occupies 181-228 (RRPHGCSSCDEGNAASSRCLDCQEHLCDNCVRAHQRVRLTKDHYIERG). A B box-type 2 zinc finger spans residues 260-301 (ERLGFCQHHDDEVLHLYCDTCSVPICRECTLGRHGGHSFAYL). Zn(2+)-binding residues include Cys-265, His-268, Cys-288, and His-293. Positions 378-414 (QVKAKSLYLQVEKLRQNLNKLESTISAVQQVLEEGRA) form a coiled coil. The stretch at 466–567 (SSGAFAPLTK…IENSPFKVVV (102 aa)) is one Filamin repeat. 6 NHL repeats span residues 580 to 623 (VLSF…FKPC), 627 to 670 (HHKF…FTFE), 674 to 717 (LLKF…FGPD), 721 to 764 (LNKY…IHPD), 768 to 811 (ARFL…FEAN), and 815 to 855 (LCKF…ILIF).

It belongs to the TRIM/RBCC family. Interacts (via NHL repeats) with AGO2; the interaction increases in presence of RNA. Interacts with HSP90AA1. Interacts (via NHL repeats) with MOV10, PABPC1, PUM1, PUM2, STAU2, XRN1 and XRN2 in an RNA-dependent manner. Interacts with SHCBP1; leading to enhance its stability. Post-translationally, autoubiquitinated.

The protein localises to the cytoplasm. It localises to the P-body. The enzyme catalyses S-ubiquitinyl-[E2 ubiquitin-conjugating enzyme]-L-cysteine + [acceptor protein]-L-lysine = [E2 ubiquitin-conjugating enzyme]-L-cysteine + N(6)-ubiquitinyl-[acceptor protein]-L-lysine.. The protein operates within protein modification; protein ubiquitination. In terms of biological role, E3 ubiquitin-protein ligase that cooperates with the microRNAs (miRNAs) machinery and promotes embryonic stem cells proliferation and maintenance. Binds to miRNAs and associates with AGO2, participating in post-transcriptional repression of transcripts such as CDKN1A. In addition, participates in post-transcriptional mRNA repression in a miRNA independent mechanism. Facilitates the G1-S transition to promote rapid embryonic stem cell self-renewal by repressing CDKN1A expression. Required to maintain proliferation and prevent premature differentiation of neural progenitor cells during early neural development: positively regulates FGF signaling by controlling the stability of SHCBP1. Specific regulator of miRNA biogenesis. Binds to miRNA MIR29A hairpin and postranscriptionally modulates MIR29A levels, which indirectly regulates TET proteins expression. This is E3 ubiquitin-protein ligase TRIM71 (Trim71) from Rattus norvegicus (Rat).